The chain runs to 155 residues: Large ribosomal subunit protein uL22 (155 aa).

Belongs to the universal ribosomal protein uL22 family. In terms of assembly, part of the 50S ribosomal subunit.

Its function is as follows. This protein binds specifically to 23S rRNA. It makes multiple contacts with different domains of the 23S rRNA in the assembled 50S subunit and ribosome. The globular domain of the protein is located near the polypeptide exit tunnel on the outside of the subunit, while an extended beta-hairpin is found that lines the wall of the exit tunnel in the center of the 70S ribosome. This chain is Large ribosomal subunit protein uL22, found in Pyrococcus furiosus (strain ATCC 43587 / DSM 3638 / JCM 8422 / Vc1).